The chain runs to 291 residues: Quinol oxidase subunit 2 (291 aa).

An N-terminal signal peptide occupies residues 1–28 (MQLKKAFWKLASLLPXSLLLFLGGCDKK). 2 helical membrane-spanning segments follow: residues 49 to 69 (SFLL…VILI) and 91 to 111 (LEII…IPTV).

This sequence belongs to the cytochrome c oxidase subunit 2 family.

Its subcellular location is the cell membrane. It catalyses the reaction 2 a quinol + O2 = 2 a quinone + 2 H2O. Catalyzes quinol oxidation with the concomitant reduction of oxygen to water. Subunit II transfers the electrons from a quinol to the binuclear center of the catalytic subunit I. This Bacillus cereus (strain ATCC 10987 / NRS 248) protein is Quinol oxidase subunit 2.